A 363-amino-acid chain; its full sequence is Pyrimidine monooxygenase RutA (363 aa).

FMN contacts are provided by residues 49 to 50 (IK), asparagine 115, glutamate 124, 140 to 141 (RY), and serine 190.

It belongs to the NtaA/SnaA/DszA monooxygenase family. RutA subfamily.

It carries out the reaction uracil + FMNH2 + NADH + O2 = (Z)-3-ureidoacrylate + FMN + NAD(+) + H2O + H(+). The catalysed reaction is thymine + FMNH2 + NADH + O2 = (Z)-2-methylureidoacrylate + FMN + NAD(+) + H2O + H(+). Catalyzes the pyrimidine ring opening between N-3 and C-4 by an unusual flavin hydroperoxide-catalyzed mechanism, adding oxygen atoms in the process to yield ureidoacrylate peracid, that immediately reacts with FMN forming ureidoacrylate and FMN-N(5)-oxide. The FMN-N(5)-oxide reacts spontaneously with NADH to produce FMN. Requires the flavin reductase RutF to regenerate FMN in vivo. The protein is Pyrimidine monooxygenase RutA of Enterobacter cloacae subsp. cloacae (strain ATCC 13047 / DSM 30054 / NBRC 13535 / NCTC 10005 / WDCM 00083 / NCDC 279-56).